A 212-amino-acid polypeptide reads, in one-letter code: Deoxyribose-phosphate aldolase (212 aa).

Asp89 serves as the catalytic Proton donor/acceptor. Lys151 acts as the Schiff-base intermediate with acetaldehyde in catalysis. Residue Lys180 is the Proton donor/acceptor of the active site.

The protein belongs to the DeoC/FbaB aldolase family. DeoC type 1 subfamily.

Its subcellular location is the cytoplasm. The enzyme catalyses 2-deoxy-D-ribose 5-phosphate = D-glyceraldehyde 3-phosphate + acetaldehyde. It participates in carbohydrate degradation; 2-deoxy-D-ribose 1-phosphate degradation; D-glyceraldehyde 3-phosphate and acetaldehyde from 2-deoxy-alpha-D-ribose 1-phosphate: step 2/2. In terms of biological role, catalyzes a reversible aldol reaction between acetaldehyde and D-glyceraldehyde 3-phosphate to generate 2-deoxy-D-ribose 5-phosphate. The protein is Deoxyribose-phosphate aldolase of Clostridium botulinum (strain ATCC 19397 / Type A).